The chain runs to 458 residues: tRNA-2-methylthio-N(6)-dimethylallyladenosine synthase (458 aa).

In terms of domain architecture, MTTase N-terminal spans 15–134 (KKVFIKTYGC…LPELLQQAQQ (120 aa)). Residues cysteine 24, cysteine 60, cysteine 97, cysteine 175, cysteine 179, and cysteine 182 each contribute to the [4Fe-4S] cluster site. In terms of domain architecture, Radical SAM core spans 161–393 (QKRGVSAFLT…QALLLDQQHR (233 aa)). The TRAM domain maps to 396 to 457 (RSKIGQTTDV…SNSFVGEKAN (62 aa)).

It belongs to the methylthiotransferase family. MiaB subfamily. As to quaternary structure, monomer. [4Fe-4S] cluster is required as a cofactor.

It is found in the cytoplasm. The catalysed reaction is N(6)-dimethylallyladenosine(37) in tRNA + (sulfur carrier)-SH + AH2 + 2 S-adenosyl-L-methionine = 2-methylsulfanyl-N(6)-dimethylallyladenosine(37) in tRNA + (sulfur carrier)-H + 5'-deoxyadenosine + L-methionine + A + S-adenosyl-L-homocysteine + 2 H(+). In terms of biological role, catalyzes the methylthiolation of N6-(dimethylallyl)adenosine (i(6)A), leading to the formation of 2-methylthio-N6-(dimethylallyl)adenosine (ms(2)i(6)A) at position 37 in tRNAs that read codons beginning with uridine. This is tRNA-2-methylthio-N(6)-dimethylallyladenosine synthase from Bartonella bacilliformis (strain ATCC 35685 / KC583 / Herrer 020/F12,63).